We begin with the raw amino-acid sequence, 599 residues long: Putative clathrin assembly protein At1g03050 (599 aa).

The ENTH domain maps to 26–162; that stretch reads GRSASLSELD…DFRMQARHGK (137 aa). 2 disordered regions span residues 332-382 and 580-599; these read KQSK…PEEE and QGHM…TPQY. Composition is skewed to acidic residues over residues 341 to 359 and 373 to 382; these read ADED…EQED and EEDDVKPEEE. Polar residues predominate over residues 585–599; it reads LRQNQNQPYSYTPQY.

The protein resides in the membrane. Its subcellular location is the clathrin-coated pit. The protein localises to the golgi apparatus. It is found in the cytoplasmic vesicle. It localises to the clathrin-coated vesicle. The sequence is that of Putative clathrin assembly protein At1g03050 from Arabidopsis thaliana (Mouse-ear cress).